The chain runs to 149 residues: Probable flagellum biosynthesis repressor protein FlbT (149 aa).

This sequence belongs to the FlbT family.

Its function is as follows. Has a post-transcriptional repressor function in flagellum biogenesis. Associates with the 5'-UTR of fljK mRNA and promotes its degradation. In Rhizobium leguminosarum bv. trifolii (strain WSM2304), this protein is Probable flagellum biosynthesis repressor protein FlbT.